The following is a 197-amino-acid chain: Imidazoleglycerol-phosphate dehydratase (197 aa).

Belongs to the imidazoleglycerol-phosphate dehydratase family.

It localises to the cytoplasm. The enzyme catalyses D-erythro-1-(imidazol-4-yl)glycerol 3-phosphate = 3-(imidazol-4-yl)-2-oxopropyl phosphate + H2O. It participates in amino-acid biosynthesis; L-histidine biosynthesis; L-histidine from 5-phospho-alpha-D-ribose 1-diphosphate: step 6/9. The polypeptide is Imidazoleglycerol-phosphate dehydratase (Gloeobacter violaceus (strain ATCC 29082 / PCC 7421)).